Consider the following 354-residue polypeptide: Phospho-N-acetylmuramoyl-pentapeptide-transferase (354 aa).

10 helical membrane passes run Ile23 to Ala43, Thr66 to Ser86, Leu88 to Phe108, Phe138 to Phe158, Tyr161 to Ser181, Gly193 to Cys213, Val227 to Phe247, Val257 to Val277, Ile282 to Val302, and Lys331 to Leu351.

The protein belongs to the glycosyltransferase 4 family. MraY subfamily. Mg(2+) is required as a cofactor.

It is found in the cell inner membrane. The enzyme catalyses UDP-N-acetyl-alpha-D-muramoyl-L-alanyl-gamma-D-glutamyl-meso-2,6-diaminopimeloyl-D-alanyl-D-alanine + di-trans,octa-cis-undecaprenyl phosphate = di-trans,octa-cis-undecaprenyl diphospho-N-acetyl-alpha-D-muramoyl-L-alanyl-D-glutamyl-meso-2,6-diaminopimeloyl-D-alanyl-D-alanine + UMP. It participates in cell wall biogenesis; peptidoglycan biosynthesis. Catalyzes the initial step of the lipid cycle reactions in the biosynthesis of the cell wall peptidoglycan: transfers peptidoglycan precursor phospho-MurNAc-pentapeptide from UDP-MurNAc-pentapeptide onto the lipid carrier undecaprenyl phosphate, yielding undecaprenyl-pyrophosphoryl-MurNAc-pentapeptide, known as lipid I. The chain is Phospho-N-acetylmuramoyl-pentapeptide-transferase from Campylobacter hominis (strain ATCC BAA-381 / DSM 21671 / CCUG 45161 / LMG 19568 / NCTC 13146 / CH001A).